Reading from the N-terminus, the 74-residue chain is Antimicrobial peptide 1 (74 aa).

The N-terminal stretch at 1–22 is a signal peptide; sequence MEIKYLLTVFLVLLIGSDYCQA. Lys-40 is subject to Lysine amide. A propeptide spanning residues 46-74 is cleaved from the precursor; sequence DLDGQIDRSRNFRKRDAELEELLSKLPIY.

In terms of tissue distribution, expressed by the venom gland.

The protein resides in the secreted. It localises to the target cell membrane. Its function is as follows. Has antibacterial activity against the Gram-positive bacteria S.aureus (MIC=20 uM), the Gram-negative bacteria E.coli (MIC=150 uM), and the yeast C.albicans (MIC=64 uM). Causes hemolysis on horse erythrocytes. The sequence is that of Antimicrobial peptide 1 from Androctonus amoreuxi (African fattail scorpion).